The following is a 123-amino-acid chain: uncharacterized protein (123 aa).

The interval 1 to 28 is disordered; sequence MGLGSSKRKEEPPHKSEPKTVGRVKRAG. Residues 7-20 show a composition bias toward basic and acidic residues; it reads KRKEEPPHKSEPKT.

The protein belongs to the TUSC2 family.

This is an uncharacterized protein from Caenorhabditis elegans.